A 156-amino-acid chain; its full sequence is uncharacterized protein (156 aa).

One can recognise an N-acetyltransferase domain in the interval Glu11–Leu156.

This sequence belongs to the acetyltransferase family. As to quaternary structure, homodimer.

This is an uncharacterized protein from Bacillus subtilis (strain 168).